The chain runs to 378 residues: Transcription initiation factor IIA subunit 1 (378 aa).

At A2 the chain carries N-acetylalanine. Composition is skewed to low complexity over residues 69-79, 89-106, and 247-281; these read QVQQQHQPQQQ, QQAQ…TQQV, and PAQA…TGDT. Disordered regions lie at residues 69-108 and 247-331; these read QVQQ…QVLI and PAQA…QELF. Phosphoserine; by TAF1 is present on residues S282, S283, S318, and S323. A compositionally biased stretch (acidic residues) spans 282–331; it reads SSEEDEDEEEDYDDDEEEDKEKDGAEDGQVEEEPLNSEDDVSDEEGQELF. DNA is bound by residues H345 and R346.

The protein belongs to the TFIIA subunit 1 family. TFIIA is a heterodimer of the large unprocessed subunit 1 and a small subunit gamma. It was originally believed to be a heterotrimer of an alpha (p35), a beta (p19) and a gamma subunit (p12). TFIIA forms a complex with TBP. Part of TBP-based Pol II pre-initiation complex (PIC), in which Pol II core assembles with general transcription factors and other specific initiation factors including GTF2E1, GTF2E2, GTF2F1, GTF2F2, TCEA1, ERCC2, ERCC3, GTF2H2, GTF2H3, GTF2H4, GTF2H5, GTF2A1, GTF2A2, GTF2B and TBP; this large multi-subunit PIC complex mediates DNA unwinding and targets Pol II core to the transcription start site where the first phosphodiester bond forms. In terms of processing, the alpha and beta subunits are postranslationally produced from the precursor form by TASP1. The cleavage promotes proteasomal degradation. As to expression, expressed in pachytene spermatocytes and spermatids.

It localises to the nucleus. In terms of biological role, TFIIA is a component of the transcription machinery of RNA polymerase II and plays an important role in transcriptional activation. TFIIA in a complex with TBP mediates transcriptional activity. The sequence is that of Transcription initiation factor IIA subunit 1 (Gtf2a1) from Mus musculus (Mouse).